We begin with the raw amino-acid sequence, 399 residues long: Putative 8-amino-7-oxononanoate synthase (399 aa).

Position 24 (R24) interacts with substrate. 111 to 112 (GW) serves as a coordination point for pyridoxal 5'-phosphate. Position 141 (H141) interacts with substrate. Pyridoxal 5'-phosphate contacts are provided by residues S189, 214–217 (DEAH), and 243–246 (TFSK). Residue K246 is modified to N6-(pyridoxal phosphate)lysine. Residue T360 coordinates substrate.

It belongs to the class-II pyridoxal-phosphate-dependent aminotransferase family. BioF subfamily. In terms of assembly, homodimer. The cofactor is pyridoxal 5'-phosphate.

It carries out the reaction 6-carboxyhexanoyl-[ACP] + L-alanine + H(+) = (8S)-8-amino-7-oxononanoate + holo-[ACP] + CO2. Its pathway is cofactor biosynthesis; biotin biosynthesis. Its function is as follows. Catalyzes the decarboxylative condensation of pimeloyl-[acyl-carrier protein] and L-alanine to produce 8-amino-7-oxononanoate (AON), [acyl-carrier protein], and carbon dioxide. This chain is Putative 8-amino-7-oxononanoate synthase (bioF), found in Bordetella bronchiseptica (strain ATCC BAA-588 / NCTC 13252 / RB50) (Alcaligenes bronchisepticus).